Here is a 941-residue protein sequence, read N- to C-terminus: UvrABC system protein A (941 aa).

37 to 44 (GLSGSGKS) provides a ligand contact to ATP. The segment at 260-287 (CFKCKMSFEELEPLSFSFNSPKGACESC) adopts a C4-type zinc-finger fold. 2 consecutive ABC transporter domains span residues 316–585 (IFGY…NNHS) and 605–937 (KEKH…KFLA). Residue 637–644 (GVSGSGKS) participates in ATP binding. Residues 737-763 (CEKCQGDGDIKIEMHFLPDVLVQCDSC) form a C4-type zinc finger.

It belongs to the ABC transporter superfamily. UvrA family. Forms a heterotetramer with UvrB during the search for lesions.

It localises to the cytoplasm. Its function is as follows. The UvrABC repair system catalyzes the recognition and processing of DNA lesions. UvrA is an ATPase and a DNA-binding protein. A damage recognition complex composed of 2 UvrA and 2 UvrB subunits scans DNA for abnormalities. When the presence of a lesion has been verified by UvrB, the UvrA molecules dissociate. The sequence is that of UvrABC system protein A from Helicobacter pylori (strain J99 / ATCC 700824) (Campylobacter pylori J99).